Consider the following 62-residue polypeptide: Large ribosomal subunit protein eL24 (62 aa).

Positions 6, 9, 32, and 36 each coordinate Zn(2+). A C4-type zinc finger spans residues 6 to 36 (CSFCGADIPPGYGIMYVRSDGTVQRFCSRKC).

Belongs to the eukaryotic ribosomal protein eL24 family. As to quaternary structure, part of the 50S ribosomal subunit. Forms a cluster with proteins L3 and L14. Zn(2+) serves as cofactor.

In terms of biological role, binds to the 23S rRNA. This Pyrobaculum calidifontis (strain DSM 21063 / JCM 11548 / VA1) protein is Large ribosomal subunit protein eL24.